Consider the following 780-residue polypeptide: Oocyte zinc finger protein XlCOF8.4 (780 aa).

C2H2-type zinc fingers lie at residues 250 to 272, 278 to 300, 306 to 328, 334 to 356, 362 to 384, 390 to 412, 418 to 440, 446 to 468, 474 to 496, 618 to 640, 646 to 668, 674 to 696, 702 to 724, 730 to 752, and 758 to 780; these read FPCS…RRTH, FSCS…HRTH, FSCS…QKTH, YSCS…RRTH, YSCS…WKTH, FSCV…YRTH, FSCF…LKIH, LSCS…QKTH, FSCS…RRTH, YSCS…WRTH, FSCT…HRTH, and FSCS…FQLH.

This sequence belongs to the krueppel C2H2-type zinc-finger protein family.

Its subcellular location is the nucleus. Its function is as follows. May be involved in transcriptional regulation. In Xenopus laevis (African clawed frog), this protein is Oocyte zinc finger protein XlCOF8.4.